The primary structure comprises 400 residues: Aspartate aminotransferase (400 aa).

L-aspartate contacts are provided by G42 and N180. N6-(pyridoxal phosphate)lysine is present on K241. R373 lines the L-aspartate pocket.

The protein belongs to the class-I pyridoxal-phosphate-dependent aminotransferase family. As to quaternary structure, homodimer. Pyridoxal 5'-phosphate is required as a cofactor.

It is found in the cytoplasm. It catalyses the reaction L-aspartate + 2-oxoglutarate = oxaloacetate + L-glutamate. The sequence is that of Aspartate aminotransferase (aspC) from Sulfolobus acidocaldarius (strain ATCC 33909 / DSM 639 / JCM 8929 / NBRC 15157 / NCIMB 11770).